The chain runs to 280 residues: Undecaprenyl-diphosphatase (280 aa).

8 helical membrane-spanning segments follow: residues 3–23 (IILL…EFLP), 45–65 (VDLF…YDYW), 88–108 (QLGL…FTFA), 115–135 (LFDP…IFYV), 150–170 (VGLK…IPGT), 191–211 (AEFS…LDLL), 225–245 (VLGI…RLLV), and 255–275 (IFAW…WGFG).

The protein belongs to the UppP family.

Its subcellular location is the cell inner membrane. It carries out the reaction di-trans,octa-cis-undecaprenyl diphosphate + H2O = di-trans,octa-cis-undecaprenyl phosphate + phosphate + H(+). Catalyzes the dephosphorylation of undecaprenyl diphosphate (UPP). Confers resistance to bacitracin. This is Undecaprenyl-diphosphatase from Psychrobacter arcticus (strain DSM 17307 / VKM B-2377 / 273-4).